A 517-amino-acid chain; its full sequence is Fatty acyl-CoA reductase wat (517 aa).

2 helical membrane passes run 378-398 and 492-512; these read ILCF…MVII and VLHY…LYAL.

This sequence belongs to the fatty acyl-CoA reductase family.

The protein resides in the apical cell membrane. The catalysed reaction is a long-chain fatty acyl-CoA + 2 NADPH + 2 H(+) = a long-chain primary fatty alcohol + 2 NADP(+) + CoA. Catalyzes the reduction of saturated fatty acyl-CoA to fatty alcohols. The preferred substrates are C24:0 and C26:0. Necessary for the final stages of tracheal maturation, to facilitate the transition from water-filled to gas-filled tubes. May help to maintain the integrity of the outer hydrophobic envelope of the trachea. The polypeptide is Fatty acyl-CoA reductase wat (Drosophila melanogaster (Fruit fly)).